The sequence spans 120 residues: MFLLHEYDIFWAFLIISSVIPILAFLISGVLAPISEGPEKLSSYESGIEPMGDAWLQFRIRYYMFALVFVVFDVETVFLYPWAMSFDVLGVPVFIEALIFVLILIVGSVYAWRKGALEWS.

Transmembrane regions (helical) follow at residues isoleucine 9 to glycine 29, methionine 64 to methionine 84, and valine 88 to serine 108.

It belongs to the complex I subunit 3 family. NDH is composed of at least 16 different subunits, 5 of which are encoded in the nucleus.

The protein resides in the plastid. It localises to the chloroplast thylakoid membrane. It catalyses the reaction a plastoquinone + NADH + (n+1) H(+)(in) = a plastoquinol + NAD(+) + n H(+)(out). The enzyme catalyses a plastoquinone + NADPH + (n+1) H(+)(in) = a plastoquinol + NADP(+) + n H(+)(out). Its function is as follows. NDH shuttles electrons from NAD(P)H:plastoquinone, via FMN and iron-sulfur (Fe-S) centers, to quinones in the photosynthetic chain and possibly in a chloroplast respiratory chain. The immediate electron acceptor for the enzyme in this species is believed to be plastoquinone. Couples the redox reaction to proton translocation, and thus conserves the redox energy in a proton gradient. The chain is NAD(P)H-quinone oxidoreductase subunit 3, chloroplastic from Platanus occidentalis (Sycamore).